The primary structure comprises 1516 residues: Receptor-type tyrosine-protein phosphatase S (1516 aa).

The first 28 residues, 1-28 (MRILPSPGMPALLSLVSLLSVLLMGCVA), serve as a signal peptide directing secretion. Topologically, residues 29 to 854 (ESPPVFIKKP…PQPIIDGEEG (826 aa)) are extracellular. Ig-like C2-type domains lie at 32–122 (PVFI…AKLT), 134–223 (PNID…ANLY), and 235–317 (PRFS…AQIT). 2 disulfides stabilise this stretch: cysteine 53/cysteine 106 and cysteine 155/cysteine 206. The interval 67–71 (KKGKK) is important for binding to glycosaminoglycan chains. N-linked (GlcNAc...) asparagine glycosylation is found at asparagine 253 and asparagine 298. Residues cysteine 256 and cysteine 301 are joined by a disulfide bond. 4 Fibronectin type-III domains span residues 324–414 (APGT…TGEQ), 419–513 (APRN…TQQG), 517–606 (QPMN…TLQS), and 608–692 (LPKN…TAAN). The helical transmembrane segment at 855–875 (LIWVIGPVLAVVFIICIVIAI) threads the bilayer. Residues 876–1516 (LLYKNKRKDS…YLGSFDHYAT (641 aa)) lie on the Cytoplasmic side of the membrane. 2 Tyrosine-protein phosphatase domains span residues 961-1216 (LSQE…LLEA) and 1248-1507 (MELE…ALEY). Catalysis depends on phosphocysteine intermediate residues cysteine 1157 and cysteine 1448.

The protein belongs to the protein-tyrosine phosphatase family. Receptor class 2A subfamily. Homodimer. Binding to large heparan sulfate proteoglycan structures promotes oligomerization. Binding to chondroitin sulfate proteoglycan does not lead to oligomerization. Interacts (via Ig-like domains) with NTRK1 and NTRK3, but does not form detectable complexes with NTRK2. Interacts (via extracellular domain) with the heparan sulfate proteoglycans AGRN and COL18A1. Post-translationally, a cleavage occurs, separating the extracellular domain from the transmembrane segment. This process called 'ectodomain shedding' is thought to be involved in receptor desensitization, signal transduction and/or membrane localization. Detected in embryonic brain, dorsal root ganglion and spinal cord. Detected in embryonic retina (at protein level). Detected in embryonic brain, spinal cord, dorsal root ganglion, trigeminal ganglion, ganglia associated with the precardinal vein and vagus nerve, the inner and outer nuclear layer of the retina, limb, breast muscle, heart, gut and lung.

The protein resides in the cell membrane. It localises to the cell projection. The protein localises to the axon. It is found in the perikaryon. Its subcellular location is the cytoplasmic vesicle. The protein resides in the secretory vesicle. It localises to the synaptic vesicle membrane. The protein localises to the synapse. It is found in the synaptosome. Its subcellular location is the postsynaptic density. The protein resides in the neuron projection. It localises to the growth cone. The catalysed reaction is O-phospho-L-tyrosyl-[protein] + H2O = L-tyrosyl-[protein] + phosphate. In terms of biological role, cell surface receptor that binds to glycosaminoglycans, including chondroitin sulfate proteoglycans and heparan sulfate proteoglycans. Binding to chondroitin sulfate and heparan sulfate proteoglycans has opposite effects on PTPRS oligomerization and regulation of neurite outgrowth. Contributes to the inhibition of neurite and axonal outgrowth by chondroitin sulfate proteoglycans, also after nerve transection. Plays a role in stimulating neurite outgrowth in response to the heparan sulfate proteoglycan GPC2. Required for normal brain development, especially for normal development of the pituitary gland and the olfactory bulb. Functions as tyrosine phosphatase. Mediates dephosphorylation of NTRK1, NTRK2 and NTRK3. Plays a role in down-regulation of signaling cascades that lead to the activation of Akt and MAP kinases. Down-regulates TLR9-mediated activation of NF-kappa-B, as well as production of TNF, interferon alpha and interferon beta. This Gallus gallus (Chicken) protein is Receptor-type tyrosine-protein phosphatase S (PTPRS).